The following is a 357-amino-acid chain: Embryonic growth/differentiation factor 1 (357 aa).

The N-terminal stretch at 1–23 (MLPVCHRFCDHLLLLLLLPSTTL) is a signal peptide. The propeptide occupies 24 to 237 (APAPASMGPA…RLCPLPRLRR (214 aa)). Asn-191 is a glycosylation site (N-linked (GlcNAc...) asparagine). Disulfide bonds link Cys-251–Cys-322, Cys-280–Cys-354, and Cys-284–Cys-356.

Belongs to the TGF-beta family. In terms of assembly, homodimer; disulfide-linked. As to expression, expressed almost exclusively in the nervous system.

Its subcellular location is the secreted. Functionally, may mediate cell differentiation events during embryonic development. This is Embryonic growth/differentiation factor 1 (Gdf1) from Mus musculus (Mouse).